A 294-amino-acid polypeptide reads, in one-letter code: Phenylalanine-4-hydroxylase (294 aa).

The interval 1–20 (MSGDGLSNGPPPGARPDWTI) is disordered. Fe cation contacts are provided by H129, H134, and E175.

It belongs to the biopterin-dependent aromatic amino acid hydroxylase family. Fe(2+) is required as a cofactor.

The enzyme catalyses (6R)-L-erythro-5,6,7,8-tetrahydrobiopterin + L-phenylalanine + O2 = (4aS,6R)-4a-hydroxy-L-erythro-5,6,7,8-tetrahydrobiopterin + L-tyrosine. The protein operates within amino-acid degradation; L-phenylalanine degradation; acetoacetate and fumarate from L-phenylalanine: step 1/6. The polypeptide is Phenylalanine-4-hydroxylase (phhA) (Caulobacter vibrioides (strain ATCC 19089 / CIP 103742 / CB 15) (Caulobacter crescentus)).